A 361-amino-acid polypeptide reads, in one-letter code: ATP phosphoribosyltransferase regulatory subunit (361 aa).

This sequence belongs to the class-II aminoacyl-tRNA synthetase family. HisZ subfamily. Heteromultimer composed of HisG and HisZ subunits.

The protein resides in the cytoplasm. Its pathway is amino-acid biosynthesis; L-histidine biosynthesis; L-histidine from 5-phospho-alpha-D-ribose 1-diphosphate: step 1/9. Required for the first step of histidine biosynthesis. May allow the feedback regulation of ATP phosphoribosyltransferase activity by histidine. This chain is ATP phosphoribosyltransferase regulatory subunit, found in Thermus thermophilus (strain ATCC 27634 / DSM 579 / HB8).